Here is an 85-residue protein sequence, read N- to C-terminus: Homeobox protein knotted-1-like 7 (85 aa).

The 21-residue stretch at 1–21 folds into the ELK domain; the sequence is ELKNELKQGYKEKLVDIREEI. The homeobox; TALE-type DNA-binding region spans 22–85; the sequence is MRKRRAGKLP…NQRKRNWHSN (64 aa).

Belongs to the TALE/KNOX homeobox family. In terms of tissue distribution, expressed in all tissues examined. Highest expression in leaves.

Its subcellular location is the nucleus. The protein is Homeobox protein knotted-1-like 7 (KNOX7) of Zea mays (Maize).